A 601-amino-acid polypeptide reads, in one-letter code: CDPK-related kinase 5 (601 aa).

The segment covering 1-19 has biased composition (polar residues); the sequence is MGLCTSKPNSSNSDQTPAR. Disordered regions lie at residues 1–55 and 70–98; these read MGLC…KSPF and KKTP…PPPS. The N-myristoyl glycine moiety is linked to residue glycine 2. Residues 26–35 are compositionally biased toward low complexity; it reads SESVKPSSSS. Residues 36 to 48 are compositionally biased toward polar residues; sequence VNGEDQCVTTTNN. Positions 148 to 410 constitute a Protein kinase domain; sequence YELGDEVGRG…AAQALSHPWI (263 aa). Residues 154 to 162 and lysine 180 contribute to the ATP site; that span reads VGRGHFGYT. The Proton acceptor role is filled by aspartate 276. Residue serine 316 is modified to Phosphoserine. The interval 415 to 445 is autoinhibitory domain; that stretch reads DAKVPMDILVFKLMRAYLRSSSLRKAALRAL. The calmodulin binding (CaMBD) stretch occupies residues 434–454; that stretch reads SSSLRKAALRALSKTLTVDEL. 4 EF-hand domains span residues 452-488, 489-524, 525-564, and 567-596; these read DELF…ATDA, MKDS…VHQL, EALD…GPSV, and HAVL…VSSR. 10 residues coordinate Ca(2+): serine 467, asparagine 469, threonine 471, asparagine 476, arginine 508, glutamate 513, asparagine 546, glutamate 553, aspartate 578, and lysine 580. A Phosphoserine modification is found at serine 582.

It belongs to the protein kinase superfamily. Ser/Thr protein kinase family. CDPK subfamily. In terms of assembly, binds calmodulin (CaM) in a calcium-dependent manner.

The protein resides in the membrane. The catalysed reaction is L-seryl-[protein] + ATP = O-phospho-L-seryl-[protein] + ADP + H(+). It carries out the reaction L-threonyl-[protein] + ATP = O-phospho-L-threonyl-[protein] + ADP + H(+). Activated by calcium and calmodulin. Autophosphorylation may play an important role in the regulation of the kinase activity. May play a role in signal transduction pathways that involve calcium as a second messenger. This chain is CDPK-related kinase 5 (CRK5), found in Arabidopsis thaliana (Mouse-ear cress).